Consider the following 291-residue polypeptide: 5'-3' exonuclease (291 aa).

The 5'-3' exonuclease domain maps to 176-269 (TPKQVIEYKG…VHAALKPIDK (94 aa)).

Functionally, 5'-3' exonuclease acting preferentially on double-stranded DNA. The sequence is that of 5'-3' exonuclease (polA) from Mycoplasma pneumoniae (strain ATCC 29342 / M129 / Subtype 1) (Mycoplasmoides pneumoniae).